The primary structure comprises 174 residues: MTIKPLIILPDPVLRQVSTPVETIDADIRRLADDMLETMYDAPGIGLAAIQIGVPKRLLVLDVTKEGEEKQPLVFINPKVVRSSEERSVYEEGCLSIPDYYAEVERPAAITVEYVDREGKEQAVEAEGLLATCLQHEIDHLNGVLFIDYISKLKRDMVIRRFTKAAKTRGAKAI.

2 residues coordinate Fe cation: Cys-94 and His-136. Glu-137 is a catalytic residue. A Fe cation-binding site is contributed by His-140.

The protein belongs to the polypeptide deformylase family. Fe(2+) is required as a cofactor.

It carries out the reaction N-terminal N-formyl-L-methionyl-[peptide] + H2O = N-terminal L-methionyl-[peptide] + formate. Its function is as follows. Removes the formyl group from the N-terminal Met of newly synthesized proteins. Requires at least a dipeptide for an efficient rate of reaction. N-terminal L-methionine is a prerequisite for activity but the enzyme has broad specificity at other positions. This chain is Peptide deformylase, found in Rhizobium meliloti (strain 1021) (Ensifer meliloti).